The chain runs to 123 residues: Intracellular iron chaperone frataxin (123 aa).

As to quaternary structure, homodimer, upon Fe(2+) binding. Interacts with the SufS/SufU complex. Interacts with CpfC. Fe(2+) is required as a cofactor.

It localises to the cytoplasm. In terms of biological role, plays an essential role in iron intracellular trafficking to iron cofactor biogenesis systems including iron-sulfur cluster (Fe-S) or heme assembly. Promotes the biosynthesis of iron-sulfur clusters by delivering Fe to the complex composed of the cysteine desulfurase SufS and the zinc-dependent sulfurtransferase SufU. Also plays a critical role in coproporphyrin-dependent heme b biogenesis and thus provides an essential function for the bacterial global metabolism. This chain is Intracellular iron chaperone frataxin (fra), found in Bacillus subtilis (strain 168).